The following is a 256-amino-acid chain: Phosphate import ATP-binding protein PstB (256 aa).

The ABC transporter domain maps to Ile10–Ile251. Gly42 to Ser49 is a binding site for ATP.

This sequence belongs to the ABC transporter superfamily. Phosphate importer (TC 3.A.1.7) family. In terms of assembly, the complex is composed of two ATP-binding proteins (PstB), two transmembrane proteins (PstC and PstA) and a solute-binding protein (PstS).

The protein localises to the cell inner membrane. The enzyme catalyses phosphate(out) + ATP + H2O = ADP + 2 phosphate(in) + H(+). Functionally, part of the ABC transporter complex PstSACB involved in phosphate import. Responsible for energy coupling to the transport system. In Syntrophus aciditrophicus (strain SB), this protein is Phosphate import ATP-binding protein PstB.